Here is a 355-residue protein sequence, read N- to C-terminus: Guanine nucleotide-binding protein G(q) subunit alpha (355 aa).

The S-palmitoyl cysteine moiety is linked to residue Cys-3. In terms of domain architecture, G-alpha spans Lys-32–Leu-355. A G1 motif region spans residues Lys-35–Thr-48. GTP contacts are provided by residues Gly-40 to Ser-47, Leu-174 to Thr-180, Asp-199 to Gln-203, Asn-269 to Asp-272, and Ala-326. Residues Ser-47 and Thr-180 each contribute to the Mg(2+) site. The segment at Asp-172–Thr-180 is G2 motif. The interval Phe-195–Arg-204 is G3 motif. The segment at Ile-265–Asp-272 is G4 motif. The interval Thr-324–Thr-329 is G5 motif.

The protein belongs to the G-alpha family. G(q) subfamily. In terms of assembly, g proteins are composed of 3 units; alpha, beta and gamma. The alpha chain contains the guanine nucleotide binding site.

In terms of biological role, guanine nucleotide-binding proteins (G proteins) are involved as modulators or transducers in various transmembrane signaling systems. The chain is Guanine nucleotide-binding protein G(q) subunit alpha from Geodia cydonium (Sponge).